The sequence spans 747 residues: ATP-dependent RNA helicase DBP7 (747 aa).

2 disordered regions span residues 1–102 (MDDD…TYVS) and 111–130 (SKLE…SNAP). The span at 15–24 (SNASSKSSAQ) shows a compositional bias: polar residues. 2 stretches are compositionally biased toward basic and acidic residues: residues 75 to 96 (SFRE…EGGK) and 111 to 123 (SKLE…EEKT). Positions 135–164 (DDFNGLGLNDNLVHHLTESLRFKNPTQIQK) match the Q motif motif. A Helicase ATP-binding domain is found at 168–363 (PSLLSTSRDL…SIILNNPEQI (196 aa)). Position 181 to 188 (181 to 188 (AQTGSGKT)) interacts with ATP. Residues 295–298 (DEGD) carry the DEAD box motif. The Helicase C-terminal domain occupies 401–626 (TLSAVLKEVA…SSEIKKSDPK (226 aa)). The segment at 700–729 (KKLGSLATKSSSTRKEYGEKSRKLEDPRKK) is disordered. The segment covering 712–728 (TRKEYGEKSRKLEDPRK) has biased composition (basic and acidic residues).

It belongs to the DEAD box helicase family. DDX31/DBP7 subfamily.

It is found in the nucleus. Its subcellular location is the nucleolus. The catalysed reaction is ATP + H2O = ADP + phosphate + H(+). Its function is as follows. ATP-binding RNA helicase involved in the biogenesis of 60S ribosomal subunits and is required for the normal formation of 25S and 5.8S rRNAs. The protein is ATP-dependent RNA helicase DBP7 (DBP7) of Meyerozyma guilliermondii (strain ATCC 6260 / CBS 566 / DSM 6381 / JCM 1539 / NBRC 10279 / NRRL Y-324) (Yeast).